The following is a 103-amino-acid chain: uncharacterized protein (103 aa).

Residues 33–57 form a helical membrane-spanning segment; sequence GYVAAIVAGPVSMSPLDWICPLLAI.

It is found in the membrane. This is an uncharacterized protein from Sinorhizobium fredii (strain NBRC 101917 / NGR234).